The primary structure comprises 486 residues: Transcription enhancer factor-like protein egl-44 (486 aa).

Low complexity predominate over residues G47–G57. The interval G47–L87 is disordered. Positions S88–D164 form a DNA-binding region, TEA. Residues E165 to S188 are disordered.

In terms of assembly, interacts (via N-terminus) with egl-46 (via C-terminus); the interaction is direct; the interaction may regulate transcription. Interacts with yap-1 (via WW domain); the interaction may regulate transcription. As to expression, expressed in HSN neurons in embryos and in the FLP neurons from the L1 stage through to adults. Not expressed in touch cells. Also expressed in larval hypodermis, intestine, pharyngeal muscle and other neurons. In adults expression is lost from some neurons, is weaker in the hypodermis but remains in the intestine. Expressed in HOB neuron, ray neurons RnA and RnB, and the ray structural cell, Rnst; rays are male-specific genital sensilla (simple sense organs).

The protein localises to the nucleus. Transcription factor. Binds to DNA sequence motif 5'-CATNNNNAAATGCAT-3' as a heterodimer with egl-46. Represses expression of genes involved in differentiation of touch receptor neurons (TRN), probably acting as a heterodimer with egl-46, perhaps by occupying similar cis-regulatory elements as an unc-86/mec-3 heterodimer. Plays a role in cell fate specification of neurons, including the hook neuron HOB, and touch receptor neurons. Involved in male mating behavior, acting in concert with egl-46, via modulation of expression of polycystins lov-1 and pkd-2, homeodomain protein ceh-26, and neuropeptide-like protein nlp-8. Acts upstream of egl-46 to prevent touch cell differentiation in FLP neurons. Plays a role in neuron differentiation by repressing the expression of zag-1 in FLP neurons, probably acting as a heterodimer with egl-46; because zag-1 represses expression of egl-46 and egl-44, together these proteins form a bistable, negative-feedback loop that regulates the choice between neuronal fates. Also promotes HSN neuron development. In association with egl-46, regulates cell cycle exit in the neuronal Q cell lineage. Plays a role in specifying commissural dendrites of the PVD nociceptive neurons, acting in concert with egl-46. May be involved in thermal stress response downstream of yap-1. The chain is Transcription enhancer factor-like protein egl-44 (egl-44) from Caenorhabditis elegans.